Consider the following 369-residue polypeptide: Leucine carboxyl methyltransferase 1 (369 aa).

Residues R84, G108, D132, 187-188 (DL), and E215 contribute to the S-adenosyl-L-methionine site.

Belongs to the methyltransferase superfamily. LCMT family.

It catalyses the reaction [phosphatase 2A protein]-C-terminal L-leucine + S-adenosyl-L-methionine = [phosphatase 2A protein]-C-terminal L-leucine methyl ester + S-adenosyl-L-homocysteine. In terms of biological role, methylates the carboxyl group of the C-terminal leucine residue of protein phosphatase 2A catalytic subunits to form alpha-leucine ester residues. The polypeptide is Leucine carboxyl methyltransferase 1 (PPM1) (Debaryomyces hansenii (strain ATCC 36239 / CBS 767 / BCRC 21394 / JCM 1990 / NBRC 0083 / IGC 2968) (Yeast)).